A 154-amino-acid polypeptide reads, in one-letter code: Protein X (154 aa).

Positions 28 to 50 (RPLPGPLGAVPPSSPSAVPADDG) are disordered. Over residues 33 to 48 (PLGAVPPSSPSAVPAD) the composition is skewed to low complexity. Residues 68–117 (PCALRFTSARRMETTVNAPWSLPTVLHKRTLGLSGWSMTWIEEYIKDCVF) are mitochondrial targeting sequence.

This sequence belongs to the orthohepadnavirus protein X family. In terms of assembly, may form homodimer. May interact with host CEBPA, CFLAR, CREB1, DDB1, E4F1, HBXIP, HSPD1/HSP60, NFKBIA, POLR2E and SMAD4. Interacts with host SMC5-SMC6 complex and induces its degradation. Interacts with host TRPC4AP; leading to prevent ubiquitination of TRPC4AP. Interacts with host PLSCR1; this interaction promotes ubiquitination and degradation of HBx and impairs HBx-mediated cell proliferation. Post-translationally, a fraction may be phosphorylated in insect cells and HepG2 cells, a human hepatoblastoma cell line. Phosphorylated in vitro by host protein kinase C or mitogen-activated protein kinase. N-acetylated in insect cells.

Its subcellular location is the host cytoplasm. It localises to the host nucleus. The protein localises to the host mitochondrion. Multifunctional protein that plays a role in silencing host antiviral defenses and promoting viral transcription. Does not seem to be essential for HBV infection. May be directly involved in development of cirrhosis and liver cancer (hepatocellular carcinoma). Most of cytosolic activities involve modulation of cytosolic calcium. The effect on apoptosis is controversial depending on the cell types in which the studies have been conducted. May induce apoptosis by localizing in mitochondria and causing loss of mitochondrial membrane potential. May also modulate apoptosis by binding host CFLAR, a key regulator of the death-inducing signaling complex (DISC). Promotes viral transcription by using the host E3 ubiquitin ligase DDB1 to target the SMC5-SMC6 complex to proteasomal degradation. This host complex would otherwise bind to viral episomal DNA, and prevents its transcription. Moderately stimulates transcription of many different viral and cellular transcription elements. Promoters and enhancers stimulated by HBx contain DNA binding sites for NF-kappa-B, AP-1, AP-2, c-EBP, ATF/CREB, or the calcium-activated factor NF-AT. The chain is Protein X from Homo sapiens (Human).